The primary structure comprises 319 residues: 1-aminocyclopropane-1-carboxylate oxidase (319 aa).

Positions 153-253 constitute a Fe2OG dioxygenase domain; sequence PTFGTKVSNY…RMSIASFYNP (101 aa). Fe cation is bound by residues histidine 177, aspartate 179, and histidine 234.

The protein belongs to the iron/ascorbate-dependent oxidoreductase family. Fe cation is required as a cofactor.

It catalyses the reaction 1-aminocyclopropane-1-carboxylate + L-ascorbate + O2 = ethene + L-dehydroascorbate + hydrogen cyanide + CO2 + 2 H2O. It participates in alkene biosynthesis; ethylene biosynthesis via S-adenosyl-L-methionine; ethylene from S-adenosyl-L-methionine: step 2/2. The protein is 1-aminocyclopropane-1-carboxylate oxidase (ACO1) of Prunus mume (Japanese apricot).